The following is a 280-amino-acid chain: tRNA(Ile)-lysidine synthase, plastid (280 aa).

Residue 28–33 coordinates ATP; it reads SAGQDS.

The protein belongs to the tRNA(Ile)-lysidine synthase family.

The protein localises to the plastid. It catalyses the reaction cytidine(34) in tRNA(Ile2) + L-lysine + ATP = lysidine(34) in tRNA(Ile2) + AMP + diphosphate + H(+). Functionally, ligates lysine onto the cytidine present at position 34 of the AUA codon-specific tRNA(Ile) that contains the anticodon CAU, in an ATP-dependent manner. Cytidine is converted to lysidine, thus changing the amino acid specificity of the tRNA from methionine to isoleucine. The sequence is that of tRNA(Ile)-lysidine synthase, plastid (tilS) from Helicosporidium sp. subsp. Simulium jonesii (Green alga).